A 199-amino-acid chain; its full sequence is MTKVLVLYYSTYGHIETMAEAVAEGVRAAGAQADIKRVPETVPEDVARTHHFKLDQAAPIATPADLEAYDAIIVGTPTRFGRMASQMASFWDQTGGLWMKGALIGKVGAAFTSTATQHGGQETTLFSVITNLLHQGMVISGLPYNFQGQMRLDEITGGAPYGATTIAAGDGSRAVSDNERDGARFLGQHVAQIAAKLSA.

The region spanning 4 to 190 is the Flavodoxin-like domain; sequence VLVLYYSTYG…DGARFLGQHV (187 aa). FMN contacts are provided by residues 10 to 15 and 78 to 80; these read STYGHI and TRF. Tyrosine 12 serves as a coordination point for NAD(+). Tryptophan 98 is a binding site for substrate. Residues 113-119 and histidine 134 each bind FMN; that span reads STATQHG.

This sequence belongs to the WrbA family. FMN is required as a cofactor.

It carries out the reaction a quinone + NADH + H(+) = a quinol + NAD(+). The enzyme catalyses a quinone + NADPH + H(+) = a quinol + NADP(+). The chain is NAD(P)H dehydrogenase (quinone) from Gluconacetobacter diazotrophicus (strain ATCC 49037 / DSM 5601 / CCUG 37298 / CIP 103539 / LMG 7603 / PAl5).